Here is a 23-residue protein sequence, read N- to C-terminus: Alpha-amanitin proprotein (23 aa).

Isoleucine 1 bears the (3R,4R)-4,5-dihydroxyisoleucine; in form alpha-amanitin mark. Isoleucine 1 carries the (3R,4S)-4-hydroxyisoleucine; in form gamma-amanitin modification. Positions 1–8 (IWGIGCNP) form a cross-link, cyclopeptide (Ile-Pro). Residues 2–6 (WGIGC) constitute a cross-link (2'-cysteinyl-6'-hydroxytryptophan sulfoxide (Trp-Cys)). Proline 8 bears the 4-hydroxyproline mark. Residues 9-23 (CVGDEVTALITRGEA) constitute a propeptide that is removed on maturation.

This sequence belongs to the MSDIN fungal toxin family. In terms of processing, processed by the macrocyclase-peptidase enzyme POPB to yield a toxic cyclic decapeptide. POPB first removes 10 residues from the N-terminus. Conformational trapping of the remaining peptide forces the enzyme to release this intermediate rather than proceed to macrocyclization. The enzyme rebinds the remaining peptide in a different conformation and catalyzes macrocyclization of the N-terminal 8 residues.

Functionally, major toxin belonging to the bicyclic octapeptides amatoxins that acts by binding non-competitively to RNA polymerase II and greatly slowing the elongation of transcripts from target promoters. The protein is Alpha-amanitin proprotein of Amanita fuligineoides.